We begin with the raw amino-acid sequence, 382 residues long: Mannitol-1-phosphate 5-dehydrogenase (382 aa).

NAD(+) is bound at residue 3-14; the sequence is ALHFGAGNIGRG.

The protein belongs to the mannitol dehydrogenase family.

The catalysed reaction is D-mannitol 1-phosphate + NAD(+) = beta-D-fructose 6-phosphate + NADH + H(+). This is Mannitol-1-phosphate 5-dehydrogenase from Cronobacter sakazakii (strain ATCC BAA-894) (Enterobacter sakazakii).